Consider the following 169-residue polypeptide: MERAIFAGGCFWCMVQPFEEQDGILSVRSGYTGGHVVNPTYEQVCSKMTGHTEAVEIIFDESKISYADLVEIYWRQTDPTDSFGQFEDRGDNYRPVIFYFDEQQRKIAEQSKANLQASGHFNRPIVTTIEAAQPFYEAEKDHQAFYRKNPERYARSSAIRHHFLKENWS.

Residue Cys10 is part of the active site.

The protein belongs to the MsrA Met sulfoxide reductase family.

It carries out the reaction L-methionyl-[protein] + [thioredoxin]-disulfide + H2O = L-methionyl-(S)-S-oxide-[protein] + [thioredoxin]-dithiol. It catalyses the reaction [thioredoxin]-disulfide + L-methionine + H2O = L-methionine (S)-S-oxide + [thioredoxin]-dithiol. Functionally, has an important function as a repair enzyme for proteins that have been inactivated by oxidation. Catalyzes the reversible oxidation-reduction of methionine sulfoxide in proteins to methionine. In Streptococcus mutans serotype c (strain ATCC 700610 / UA159), this protein is Peptide methionine sulfoxide reductase MsrA.